A 354-amino-acid polypeptide reads, in one-letter code: Uroporphyrinogen decarboxylase (354 aa).

Substrate contacts are provided by residues 25–29 (RQAGR), aspartate 75, tyrosine 152, threonine 207, and histidine 330.

It belongs to the uroporphyrinogen decarboxylase family. As to quaternary structure, homodimer.

The protein resides in the cytoplasm. It catalyses the reaction uroporphyrinogen III + 4 H(+) = coproporphyrinogen III + 4 CO2. It functions in the pathway porphyrin-containing compound metabolism; protoporphyrin-IX biosynthesis; coproporphyrinogen-III from 5-aminolevulinate: step 4/4. Its function is as follows. Catalyzes the decarboxylation of four acetate groups of uroporphyrinogen-III to yield coproporphyrinogen-III. This Xanthomonas campestris pv. campestris (strain 8004) protein is Uroporphyrinogen decarboxylase.